Consider the following 243-residue polypeptide: DLANFLNCLGARVRGAGTDVIKIEGVDSLGGCLRYAVIPDRIEAGTFMVAAAATRGDVVLENVIPRHLEPLIAKLREAGVEVGEEEDRVRVRASGPLSPIDIKTMPYPGFPTDMQSQMMALLSTVPGTSVIVENIFENRFKVADELKRMGARIKVEGRLAVVEGVERLQGACVRATDLRAGAALVVAGLMAEGETRIDNVQYIDRGYFNLEQKLRMLGARIWRAPYDEKTPAQDNAVRKSALI.

Positions 113 and 135 each coordinate UDP-N-acetyl-alpha-D-glucosamine.

This sequence belongs to the EPSP synthase family. MurA subfamily.

Its subcellular location is the cytoplasm. The enzyme catalyses phosphoenolpyruvate + UDP-N-acetyl-alpha-D-glucosamine = UDP-N-acetyl-3-O-(1-carboxyvinyl)-alpha-D-glucosamine + phosphate. It functions in the pathway cell wall biogenesis; peptidoglycan biosynthesis. Functionally, cell wall formation. Adds enolpyruvyl to UDP-N-acetylglucosamine. In Desulfofundulus thermocisternus (Desulfotomaculum thermocisternum), this protein is UDP-N-acetylglucosamine 1-carboxyvinyltransferase (murA).